We begin with the raw amino-acid sequence, 176 residues long: 3-hydroxyacyl-[acyl-carrier-protein] dehydratase FabZ (176 aa).

His-54 is an active-site residue.

It belongs to the thioester dehydratase family. FabZ subfamily.

The protein resides in the cytoplasm. The catalysed reaction is a (3R)-hydroxyacyl-[ACP] = a (2E)-enoyl-[ACP] + H2O. Its function is as follows. Involved in unsaturated fatty acids biosynthesis. Catalyzes the dehydration of short chain beta-hydroxyacyl-ACPs and long chain saturated and unsaturated beta-hydroxyacyl-ACPs. The polypeptide is 3-hydroxyacyl-[acyl-carrier-protein] dehydratase FabZ (Yersinia pseudotuberculosis serotype O:1b (strain IP 31758)).